Consider the following 386-residue polypeptide: MNISNIKIMLLGSGELGKEFIIAAQRLGIHTIVVDRYKNAPAMQVAHESYVIDMLNSDALEQLILAKNPTYIVPEIEAINTDSLVKLEAHNFNIIPCAKAAKLTMDRQGIRALAAQQLNLQTSKFAFANSEQEYLDVIQSIGLPFVIKPVMSSSGKGQSIVKEHNEIKKAWDYAQNGSRGHAKGVIVEQFIDFDYEITLLTVRHKDGTSFCDPIGHIQKDGDYRFSWQPHTMPDTALAKSQEIAKEITDALGGYGVFGVELFIKGDEVFFNEVSPRPHDTGMVTLISQNINEFELHLRAIVGLPIPDIQTLQPSASAAILLEGDTANASICGIDKALADANVDIRIFGKKEIHGKRRMGVVLAKAQNTHIALETSKQALAHIHLTK.

Residues 15–16 and E75 contribute to the N(1)-(5-phospho-beta-D-ribosyl)glycinamide site; that span reads EL. Residues R107, K148, 153-158, 188-191, and E196 contribute to the ATP site; these read SSGKGQ and EQFI. One can recognise an ATP-grasp domain in the interval 112 to 301; it reads ALAAQQLNLQ…EFELHLRAIV (190 aa). Mg(2+) is bound by residues E260 and E272. N(1)-(5-phospho-beta-D-ribosyl)glycinamide-binding positions include D279, K349, and 356-357; that span reads RR.

It belongs to the PurK/PurT family. As to quaternary structure, homodimer.

The enzyme catalyses N(1)-(5-phospho-beta-D-ribosyl)glycinamide + formate + ATP = N(2)-formyl-N(1)-(5-phospho-beta-D-ribosyl)glycinamide + ADP + phosphate + H(+). Its pathway is purine metabolism; IMP biosynthesis via de novo pathway; N(2)-formyl-N(1)-(5-phospho-D-ribosyl)glycinamide from N(1)-(5-phospho-D-ribosyl)glycinamide (formate route): step 1/1. Its function is as follows. Involved in the de novo purine biosynthesis. Catalyzes the transfer of formate to 5-phospho-ribosyl-glycinamide (GAR), producing 5-phospho-ribosyl-N-formylglycinamide (FGAR). Formate is provided by PurU via hydrolysis of 10-formyl-tetrahydrofolate. The polypeptide is Formate-dependent phosphoribosylglycinamide formyltransferase (Francisella tularensis subsp. tularensis (strain SCHU S4 / Schu 4)).